The chain runs to 102 residues: Monothiol glutaredoxin-S5 (102 aa).

A Glutaredoxin domain is found at 1–101 (MENLQKMISE…PMLKRAGALW (101 aa)). Cysteine 21 is a [2Fe-2S] cluster binding site. The short motif at 99–102 (ALWL) is the Responsive for interaction with TGA factors element.

Belongs to the glutaredoxin family. CC-type subfamily.

Its subcellular location is the cytoplasm. It localises to the nucleus. Functionally, may only reduce GSH-thiol disulfides, but not protein disulfides. The chain is Monothiol glutaredoxin-S5 (GRXS5) from Arabidopsis thaliana (Mouse-ear cress).